Reading from the N-terminus, the 358-residue chain is Trace amine-associated receptor 7f (358 aa).

Over 1-47 (MSIADETVSWNQDSILSRDLFSATSAELCYENLNRSCVRSPYSPGPR) the chain is Extracellular. Residue N34 is glycosylated (N-linked (GlcNAc...) asparagine). 2 disulfides stabilise this stretch: C37-C201 and C120-C205. Residues 48-68 (LILYAVFGFGAVLAVCGNLLV) traverse the membrane as a helical segment. The Cytoplasmic segment spans residues 69-83 (MTSILHFRQLHSPAN). A helical membrane pass occupies residues 84-104 (FLVASLACADFLVGVMVMPFS). At 105–121 (MVRSVEGCWYFGDSYCK) the chain is on the extracellular side. The chain crosses the membrane as a helical span at residues 122 to 143 (LHTCFDVSFCYCSLFHLCFISV). The Cytoplasmic segment spans residues 144 to 166 (DRYIAVSDPLAYPTRFTASVSGK). The chain crosses the membrane as a helical span at residues 167–187 (CITFSWLLSISYGFSLIYTGA). The Extracellular portion of the chain corresponds to 188–212 (SEAGLEDLVSSLTCVGGCQIAVNQT). N210 is a glycosylation site (N-linked (GlcNAc...) asparagine). A helical membrane pass occupies residues 213–233 (WVFINFSVFLIPTLVMITVYS). Residues 234–274 (KIFLIAKQQAQNIEKMSKQTARASDSYKDRVAKRERKAAKT) lie on the Cytoplasmic side of the membrane. A helical transmembrane segment spans residues 275–295 (LGIAVAAFLLSWLPYFIDSFI). At 296–309 (DAFLGFITPTYVYE) the chain is on the extracellular side. A helical membrane pass occupies residues 310-333 (ILVWIVYYNSAMNPLIYAFFYPWF). The Cytoplasmic segment spans residues 334 to 358 (RKAIKLTVTGKILRENSSTTNLFSE).

This sequence belongs to the G-protein coupled receptor 1 family. Specifically expressed in neurons of the olfactory epithelium.

It is found in the cell membrane. In terms of biological role, olfactory receptor activated by trace amines, such as N-methylpiperidine and N,N-dimethylcyclohexylamine. Trace amine compounds are enriched in animal body fluids and act on trace amine-associated receptors (TAARs) to elicit both intraspecific and interspecific innate behaviors. Ligand-binding causes a conformation change that triggers signaling via G(s)-class of G alpha proteins (GNAL or GNAS). This is Trace amine-associated receptor 7f from Mus musculus (Mouse).